Reading from the N-terminus, the 419-residue chain is Protein translocase subunit SecY (419 aa).

A run of 10 helical transmembrane segments spans residues 19-39, 64-84, 113-133, 143-163, 167-189, 202-222, 255-275, 299-319, 359-379, and 380-400; these read IMIL…ITEV, VISI…AVQF, ILTV…LRSF, FVVA…SEVI, GIGN…FLIN, SNLY…FSTL, FGQA…FLTT, IFYF…YTLI, FVGS…AAAL, and GVHP…SIIN.

Belongs to the SecY/SEC61-alpha family. In terms of assembly, component of the plastid Sec protein translocase complex, which is composed of at least SecY and SecE.

It localises to the plastid. The protein resides in the chloroplast thylakoid membrane. The central subunit of the protein translocation channel SecYE. Consists of two halves formed by TMs 1-5 and 6-10. These two domains form a lateral gate at the front which open onto the bilayer between TMs 2 and 7, and are clamped together by SecE at the back. The channel is closed by both a pore ring composed of hydrophobic SecY resides and a short helix (helix 2A) on the extracellular side of the membrane which forms a plug. This Diacronema lutheri (Unicellular marine alga) protein is Protein translocase subunit SecY.